The following is a 61-amino-acid chain: Disintegrin rubistatin (61 aa).

Positions 1–61 (NPCCDAATCK…ADCPRNGLYG (61 aa)) constitute a Disintegrin domain. Cystine bridges form between C3–C26, C17–C23, C22–C47, and C35–C54. Positions 39–41 (MVD) match the Cell attachment site; atypical (MVD) motif.

It belongs to the venom metalloproteinase (M12B) family. P-II subfamily. P-IIa sub-subfamily. Monomer. In terms of tissue distribution, expressed by the venom gland.

It localises to the secreted. Its function is as follows. Recombinant disintegrin rubistatin inhibits ADP-induced platelet aggregation. In addition, it strongly induces apoptosis, and inhibits cell migration and proliferation of the human cancer cell line SK-Mel-28. This is Disintegrin rubistatin from Crotalus ruber ruber (Red diamond rattlesnake).